The primary structure comprises 99 residues: MPSKLEGAMDALITVFHNYSGSEGDKYKLSKGELKELLNAELTDFLMSQKDPMLVEKIMNDLDSNKDNEVDFNEFVVLVAALTVACNDFFQEQQKKRSK.

EF-hand domains follow at residues 13–48 (ITVFHNYSGSEGDKYKLSKGELKELLNAELTDFLMS) and 50–85 (KDPMLVEKIMNDLDSNKDNEVDFNEFVVLVAALTVA). 10 residues coordinate Ca(2+): S20, E23, D25, K28, E33, D63, N65, D67, E69, and E74.

The protein belongs to the S-100 family. Homodimer. Homodimers may assemble into larger stable oligomers. In terms of tissue distribution, in larva at 5 days post-fertilization, shows very restricted expression only in a few large cells of the olfactory placode. More widely expressed in the adult. Expressed at higher levels in gut than in spleen, head kidney and gill.

This is Protein S100-Z from Danio rerio (Zebrafish).